We begin with the raw amino-acid sequence, 217 residues long: Protein matrimony (217 aa).

The POLO box domain (PBD)-binding signature appears at 39–41 (STP). Residues Ser63 and Ser66 each carry the phosphoserine modification. The segment at 83 to 106 (KQQQQQQHQHCHRTQLKPPPFVLP) is disordered. The SAM domain maps to 157 to 217 (NHAANVEQIL…NRIMDVLHTL (61 aa)).

In terms of assembly, interacts with polo. Interacts with cort. Post-translationally, probably ubiquitinated: degraded during the oocyte-to-embryo transition by the anaphase promoting complex/cyclosome (APC/C) containing cort protein.

The protein resides in the nucleus. The protein localises to the chromosome. Functionally, polo kinase inhibitor required to maintain G2 arrest in the meiotic cell cycle in females. Holds heterochromatically paired homologs together from the end of pachytene until metaphase I. Haploinsufficient locus for homologous achiasmate segregation and may be required for the maintenance of heterochromatic pairings. This Drosophila melanogaster (Fruit fly) protein is Protein matrimony.